We begin with the raw amino-acid sequence, 146 residues long: Hemoglobin subunit beta-1 (146 aa).

A Globin domain is found at 2–146 (HWTAEEKQLI…VSHSLARRYH (145 aa)). Heme b contacts are provided by His-63 and His-92.

Belongs to the globin family. The major hemoglobin component (HbIII) is a tetramer of two alpha-2 chains and two beta-1 chains. Red blood cells.

Its function is as follows. Involved in oxygen transport from the lung to the various peripheral tissues. The sequence is that of Hemoglobin subunit beta-1 (HBB1) from Varanus albigularis (White-throated monitor).